The following is a 289-amino-acid chain: (+)-kolavelool synthase (289 aa).

It belongs to the diterpene synthase family.

It carries out the reaction (+)-kolavenyl diphosphate + H2O = (+)-kolavelool + diphosphate. Functionally, involved in the biosynthesis of (+)-O-methylkolavelool. Catalyzes the biosynthesis of (+)-kolavelool from (+)-kolavenyl diphosphate via the release of the diphosphate moiety through the nucleophilic addition of a water molecule. The protein is (+)-kolavelool synthase of Herpetosiphon aurantiacus (strain ATCC 23779 / DSM 785 / 114-95).